A 340-amino-acid polypeptide reads, in one-letter code: GTPase Obg (340 aa).

The Obg domain occupies methionine 1 to isoleucine 159. In terms of domain architecture, OBG-type G spans alanine 160–glutamate 331. Residues glycine 166–serine 173, phenylalanine 191–threonine 195, aspartate 213–glycine 216, asparagine 283–aspartate 286, and serine 312–valine 314 each bind GTP. Mg(2+)-binding residues include serine 173 and threonine 193.

This sequence belongs to the TRAFAC class OBG-HflX-like GTPase superfamily. OBG GTPase family. In terms of assembly, monomer. Mg(2+) serves as cofactor.

The protein localises to the cytoplasm. In terms of biological role, an essential GTPase which binds GTP, GDP and possibly (p)ppGpp with moderate affinity, with high nucleotide exchange rates and a fairly low GTP hydrolysis rate. Plays a role in control of the cell cycle, stress response, ribosome biogenesis and in those bacteria that undergo differentiation, in morphogenesis control. The sequence is that of GTPase Obg from Persephonella marina (strain DSM 14350 / EX-H1).